Here is a 123-residue protein sequence, read N- to C-terminus: Cysteine-rich DPF motif domain-containing protein 1 (123 aa).

The segment at 102-123 (RQDLEKRKAPSKRTPSQPGSRT) is disordered. Positions 114-123 (RTPSQPGSRT) are enriched in polar residues.

The protein belongs to the CDPF1 family.

The polypeptide is Cysteine-rich DPF motif domain-containing protein 1 (CDPF1) (Homo sapiens (Human)).